Consider the following 254-residue polypeptide: Phosphoribosylaminoimidazole-succinocarboxamide synthase (254 aa).

It belongs to the SAICAR synthetase family.

The catalysed reaction is 5-amino-1-(5-phospho-D-ribosyl)imidazole-4-carboxylate + L-aspartate + ATP = (2S)-2-[5-amino-1-(5-phospho-beta-D-ribosyl)imidazole-4-carboxamido]succinate + ADP + phosphate + 2 H(+). The protein operates within purine metabolism; IMP biosynthesis via de novo pathway; 5-amino-1-(5-phospho-D-ribosyl)imidazole-4-carboxamide from 5-amino-1-(5-phospho-D-ribosyl)imidazole-4-carboxylate: step 1/2. In Brucella canis (strain ATCC 23365 / NCTC 10854 / RM-666), this protein is Phosphoribosylaminoimidazole-succinocarboxamide synthase.